The following is a 760-amino-acid chain: MENNRNFPARQFHSLTFFAGLCIGITPVAQALAAEGQANADDTLVVEASTPSLYAPQQSADPKFSRPVADTTRTMTVISEQVIKDQGATNLTDALKNVPGVGAFFAGENGNSTTGDAIYMRGADTSNSIYIDGIRDIGSVSRDTFNTEQVEVIKGPSGTDYGRSAPTGSINMISKQPRNDSGIDASASIGSAWFRRGTLDVNQVIGDTTAVRLNVMGEKTHDAGRDKVKNERYGVAPSVAFGLGTANRLYLNYLHVTQHNTPDGGIPTIGLPGYSAPSAGTAALNHSGKVDTHNFYGTDSDYDDSTTDTATMRFEHDINDNTTIRNTTRWSRVKQDYLMTAIMGGASNITQPTSDVNSWTWSRTANTKDVSNKILTNQTNLTSTFYTGAIGHDVSTGVEFTRETQTNYGVNPVTLPAVNIYHPDSSIHPGGLTRNGANANGQTDTFAIYAFDTLQITRDFELNGGIRLDNYHTEYDSATACGGSGRGAITCPAGVAKGSPVTTVDTAKSGNLVNWKAGALYHLTENGNIYINYAVSQQPPGGNNFALAQSGSGNSANRTDFKPQKANTSEIGTKWQVLDKRLLLTAALFRTDIENEVEQNDDGTYSQYGKKRVEGYEISVAGNITPAWQMIGGYTQQKATIKNGKDVAQDGSSSLPYTPEHAFTLWSQYQATDDISVGAGARYIGSMHKGSDGAVGTPAFTEGYWVADAKLGYRVNRNLDFQLNVYNLFDTDYVASINKSGYRYHPGEPRTFLLTANMHF.

The N-terminal stretch at 1–31 is a signal peptide; that stretch reads MENNRNFPARQFHSLTFFAGLCIGITPVAQA. The TBDR plug domain occupies 67-175; it reads PVADTTRTMT…PTGSINMISK (109 aa). The TBDR beta-barrel domain occupies 180 to 760; the sequence is DSGIDASASI…TFLLTANMHF (581 aa). Positions 743–760 match the TonB C-terminal box motif; it reads RYHPGEPRTFLLTANMHF.

The protein belongs to the TonB-dependent receptor family.

The protein localises to the cell outer membrane. Involved in the active transport across the outer membrane of iron complexed with catecholate siderophores such as dihydroxybenzoylserine and dihydroxybenzoate. It derives its energy for transport by interacting with the trans-periplasmic membrane protein TonB. Can also transport catechol-substituted cephalosporins. Receptor for microcins M, H47 and E492. In Escherichia coli (strain UTI89 / UPEC), this protein is Catecholate siderophore receptor Fiu (fiu).